The following is a 949-amino-acid chain: Translation initiation factor IF-2 (949 aa).

Disordered regions lie at residues 46–82 (LTASRPAESGPEEVRVTTNIVRRRSRPSAAAEPEAEA), 145–176 (EPAVAQEASPAVTAAKPVPATPAAPPQPERAS), and 188–361 (IPIT…KTEL). The span at 152–162 (ASPAVTAAKPV) shows a compositional bias: low complexity. Residues 163 to 172 (PATPAAPPQP) are compositionally biased toward pro residues. Low complexity predominate over residues 263 to 276 (PRDAAAPRPAGARP). Residues 334–344 (SREERQFDPFH) are compositionally biased toward basic and acidic residues. The tr-type G domain maps to 449–618 (ERPPVVTIMG…LLQADLMDLK (170 aa)). A G1 region spans residues 458–465 (GHVDHGKT). 458-465 (GHVDHGKT) is a binding site for GTP. The G2 stretch occupies residues 483–487 (GITQH). The segment at 504 to 507 (DTPG) is G3. GTP-binding positions include 504–508 (DTPGH) and 558–561 (NKID). The segment at 558-561 (NKID) is G4. Residues 594–596 (SAK) are G5.

It belongs to the TRAFAC class translation factor GTPase superfamily. Classic translation factor GTPase family. IF-2 subfamily.

It localises to the cytoplasm. One of the essential components for the initiation of protein synthesis. Protects formylmethionyl-tRNA from spontaneous hydrolysis and promotes its binding to the 30S ribosomal subunits. Also involved in the hydrolysis of GTP during the formation of the 70S ribosomal complex. This Trichlorobacter lovleyi (strain ATCC BAA-1151 / DSM 17278 / SZ) (Geobacter lovleyi) protein is Translation initiation factor IF-2.